Consider the following 280-residue polypeptide: uncharacterized protein (280 aa).

Positions 1-35 (MQGQVLKKVLKKYVHIGMCTLFLHAILLFPCVAQA) are cleaved as a signal peptide.

This is an uncharacterized protein from Treponema pallidum (strain Nichols).